Here is a 238-residue protein sequence, read N- to C-terminus: 1-(5-phosphoribosyl)-5-[(5-phosphoribosylamino)methylideneamino] imidazole-4-carboxamide isomerase (238 aa).

Residue Asp8 is the Proton acceptor of the active site. The active-site Proton donor is the Asp129.

The protein belongs to the HisA/HisF family.

It localises to the cytoplasm. The enzyme catalyses 1-(5-phospho-beta-D-ribosyl)-5-[(5-phospho-beta-D-ribosylamino)methylideneamino]imidazole-4-carboxamide = 5-[(5-phospho-1-deoxy-D-ribulos-1-ylimino)methylamino]-1-(5-phospho-beta-D-ribosyl)imidazole-4-carboxamide. It participates in amino-acid biosynthesis; L-histidine biosynthesis; L-histidine from 5-phospho-alpha-D-ribose 1-diphosphate: step 4/9. In Brachyspira hyodysenteriae (strain ATCC 49526 / WA1), this protein is 1-(5-phosphoribosyl)-5-[(5-phosphoribosylamino)methylideneamino] imidazole-4-carboxamide isomerase.